A 759-amino-acid polypeptide reads, in one-letter code: Multifunctional tryptophan biosynthesis protein (759 aa).

Positions 27–223 constitute a Glutamine amidotransferase type-1 domain; it reads PIVMIDNYDS…LNLTAGTWEE (197 aa). 80 to 82 is a binding site for L-glutamine; that stretch reads GPG. Cys108 functions as the Nucleophile; for GATase activity in the catalytic mechanism. Residues Gln112 and 158–159 contribute to the L-glutamine site; that span reads SL. Catalysis depends on for GATase activity residues His197 and Glu199. The segment at 257-519 is indole-3-glycerol phosphate synthase; the sequence is ILEKIHAQRL…DPAAFARELL (263 aa). The tract at residues 536 to 759 is N-(5'-phosphoribosyl)anthranilate isomerase; the sequence is LVKVCGTRSL…KAFINAVKEL (224 aa).

It carries out the reaction N-(5-phospho-beta-D-ribosyl)anthranilate = 1-(2-carboxyphenylamino)-1-deoxy-D-ribulose 5-phosphate. The catalysed reaction is 1-(2-carboxyphenylamino)-1-deoxy-D-ribulose 5-phosphate + H(+) = (1S,2R)-1-C-(indol-3-yl)glycerol 3-phosphate + CO2 + H2O. It catalyses the reaction chorismate + L-glutamine = anthranilate + pyruvate + L-glutamate + H(+). The protein operates within amino-acid biosynthesis; L-tryptophan biosynthesis; L-tryptophan from chorismate: step 1/5. It functions in the pathway amino-acid biosynthesis; L-tryptophan biosynthesis; L-tryptophan from chorismate: step 3/5. It participates in amino-acid biosynthesis; L-tryptophan biosynthesis; L-tryptophan from chorismate: step 4/5. In terms of biological role, trifunctional enzyme bearing the Gln amidotransferase (GATase) domain of anthranilate synthase, indole-glycerolphosphate synthase, and phosphoribosylanthranilate isomerase activities. The sequence is that of Multifunctional tryptophan biosynthesis protein (trp1) from Schizosaccharomyces pombe (strain 972 / ATCC 24843) (Fission yeast).